Consider the following 151-residue polypeptide: Neuroglobin (151 aa).

Residues 1–149 (MERPEPELIR…VVQAMSRGWD (149 aa)) form the Globin domain. The cysteines at positions 46 and 55 are disulfide-linked. 2 residues coordinate heme b: His-64 and His-96.

The protein belongs to the globin family. Monomer. Homodimer and homotetramer; disulfide-linked. Mainly monomeric but also detected as part of homodimers and homotetramers. Interacts with 14-3-3 proteins; regulates the phosphorylation of NGB. Could interact (ferrous form) with G-alpha(i) proteins (GTP-bound form). Phosphorylated during hypoxia by ERK1/ERK2. Phosphorylation regulates the heme pocket hexacoordination preventing the association of His-64 with the heme metal center. Thereby, promotes the access of dioxygen and nitrite to the heme and stimulates the nitrite reductase activity. Phosphorylation during hypoxia is stabilized by 14-3-3 proteins. In terms of processing, an intramolecular Cys-46/Cys-55 disulfide bond, not necessarily present in orthologs, regulates the heme pocket hexacoordination preventing the association of His-64 with the heme metal center. Thereby, promotes the access of dioxygen and nitrite to the heme and stimulates the nitrite reductase activity. As to expression, predominantly expressed in brain, the strongest expression is seen in the frontal lobe, the subthalamic nucleus and the thalamus.

Its subcellular location is the cytoplasm. The protein resides in the cytosol. The protein localises to the mitochondrion matrix. The enzyme catalyses Fe(III)-heme b-[protein] + nitric oxide + H2O = Fe(II)-heme b-[protein] + nitrite + 2 H(+). Its function is as follows. Monomeric globin with a bis-histidyl six-coordinate heme-iron atom through which it can bind dioxygen, carbon monoxide and nitric oxide. Could help transport oxygen and increase its availability to the metabolically active neuronal tissues, though its low quantity in tissues as well as its high affinity for dioxygen, which may limit its oxygen-releasing ability, argue against it. The ferrous/deoxygenated form exhibits a nitrite reductase activity and it could produce nitric oxide which in turn inhibits cellular respiration in response to hypoxia. In its ferrous/deoxygenated state, it may also exhibit GDI (Guanine nucleotide Dissociation Inhibitor) activity toward heterotrimeric G-alpha proteins, thereby regulating signal transduction to facilitate neuroprotective responses in the wake of hypoxia and associated oxidative stress. The chain is Neuroglobin from Homo sapiens (Human).